The sequence spans 506 residues: Zinc finger and SCAN domain containing protein 4F (506 aa).

The segment at 1–24 (MASQQAPAKDLQTNNLEFTPTDSS) is disordered. An SCAN box domain is found at 37–119 (SAQLNFSPSN…RFMESLTDEC (83 aa)). 4 C2H2-type zinc fingers span residues 395–417 (YKCEECSRMFKHARSLSSHQRTH), 424–446 (LLCVTCQKMFKRVSDRRTHEIIH), 452–474 (FKCSTCEKSFSHKTNLKSHEMIH), and 480–503 (YVCSLCSRRFRQSSTYHRHLRNYH).

As to expression, up-regulated in blastocyst outgrowths and is detectable in a mosaic fashion in ES cultures.

The protein localises to the nucleus. The protein resides in the chromosome. Its subcellular location is the telomere. Functionally, transcription factor required to regulate early development. Binds telomeres and plays a key role in genomic stability by regulating telomere elongation. Acts as an activator of spontaneous telomere sister chromatid exchange (T-SCE) and telomere elongation. In Mus musculus (Mouse), this protein is Zinc finger and SCAN domain containing protein 4F (Zscan4f).